A 250-amino-acid chain; its full sequence is Eukaryotic translation initiation factor 2 subunit 2 (250 aa).

The segment at 193–217 adopts a C4-type zinc-finger fold; it reads CHTCKSPETQLTKDTRLFFLQCTNC.

This sequence belongs to the eIF-2-beta/eIF-5 family. As to quaternary structure, eukaryotic translation initiation factor 2 eIF2 is a heterotrimeric complex composed of an alpha, a beta and a gamma subunit.

It is found in the cytoplasm. The protein resides in the cytosol. In terms of biological role, component of the eIF2 complex that functions in the early steps of protein synthesis by forming a ternary complex with GTP and initiator tRNA. This complex binds to a 40S ribosomal subunit, followed by mRNA binding to form a 43S pre-initiation complex (43S PIC). Junction of the 60S ribosomal subunit to form the 80S initiation complex is preceded by hydrolysis of the GTP bound to eIF2 and release of an eIF2-GDP binary complex. In order for eIF2 to recycle and catalyze another round of initiation, the GDP bound to eIF2 must exchange with GTP by way of a reaction catalyzed by eIF2B. This is Eukaryotic translation initiation factor 2 subunit 2 from Caenorhabditis elegans.